Here is a 291-residue protein sequence, read N- to C-terminus: Shikimate dehydrogenase (NADP(+)) (291 aa).

Residues 26 to 28 (SLS) and Ser-73 each bind shikimate. Lys-77 acts as the Proton acceptor in catalysis. Shikimate is bound by residues Asn-98 and Asp-113. NADP(+) contacts are provided by residues 137 to 141 (GAGGA) and Val-238. Tyr-240 is a shikimate binding site. NADP(+) is bound at residue Gly-261.

Belongs to the shikimate dehydrogenase family. Homodimer.

The enzyme catalyses shikimate + NADP(+) = 3-dehydroshikimate + NADPH + H(+). Its pathway is metabolic intermediate biosynthesis; chorismate biosynthesis; chorismate from D-erythrose 4-phosphate and phosphoenolpyruvate: step 4/7. In terms of biological role, involved in the biosynthesis of the chorismate, which leads to the biosynthesis of aromatic amino acids. Catalyzes the reversible NADPH linked reduction of 3-dehydroshikimate (DHSA) to yield shikimate (SA). This chain is Shikimate dehydrogenase (NADP(+)), found in Listeria monocytogenes serotype 4b (strain F2365).